A 332-amino-acid polypeptide reads, in one-letter code: Probable allantoicase (332 aa).

This sequence belongs to the allantoicase family.

It catalyses the reaction allantoate + H2O = (S)-ureidoglycolate + urea. It participates in nitrogen metabolism; (S)-allantoin degradation; (S)-ureidoglycolate from allantoate (aminidohydrolase route): step 1/1. The sequence is that of Probable allantoicase from Pseudomonas paraeruginosa (strain DSM 24068 / PA7) (Pseudomonas aeruginosa (strain PA7)).